The primary structure comprises 268 residues: uncharacterized protein (268 aa).

The 63-residue stretch at N15–I77 folds into the HTH iclR-type domain. Positions L37 to Q56 form a DNA-binding region, H-T-H motif. The 174-residue stretch at I92–Y265 folds into the IclR-ED domain.

This is an uncharacterized protein from Haemophilus influenzae (strain ATCC 51907 / DSM 11121 / KW20 / Rd).